A 195-amino-acid polypeptide reads, in one-letter code: UPF0157 protein BH1888 (195 aa).

The span at 1–12 (MPPMKDSSNSTP) shows a compositional bias: polar residues. The segment at 1–21 (MPPMKDSSNSTPRTDEELQEV) is disordered.

Belongs to the UPF0157 (GrpB) family.

In Halalkalibacterium halodurans (strain ATCC BAA-125 / DSM 18197 / FERM 7344 / JCM 9153 / C-125) (Bacillus halodurans), this protein is UPF0157 protein BH1888.